Here is a 435-residue protein sequence, read N- to C-terminus: Ribulose bisphosphate carboxylase large chain (435 aa).

2 residues coordinate substrate: N104 and T154. K156 (proton acceptor) is an active-site residue. Position 158 (K158) interacts with substrate. Residues K182, D184, and E185 each contribute to the Mg(2+) site. K182 carries the N6-carboxylysine modification. Residue H275 is the Proton acceptor of the active site. 3 residues coordinate substrate: R276, H308, and S360.

The protein belongs to the RuBisCO large chain family. Type I subfamily. Heterohexadecamer of 8 large chains and 8 small chains. Mg(2+) serves as cofactor.

It localises to the plastid. The protein localises to the chloroplast. It catalyses the reaction 2 (2R)-3-phosphoglycerate + 2 H(+) = D-ribulose 1,5-bisphosphate + CO2 + H2O. It carries out the reaction D-ribulose 1,5-bisphosphate + O2 = 2-phosphoglycolate + (2R)-3-phosphoglycerate + 2 H(+). Functionally, ruBisCO catalyzes two reactions: the carboxylation of D-ribulose 1,5-bisphosphate, the primary event in carbon dioxide fixation, as well as the oxidative fragmentation of the pentose substrate in the photorespiration process. Both reactions occur simultaneously and in competition at the same active site. This Euglena pisciformis protein is Ribulose bisphosphate carboxylase large chain.